Here is a 161-residue protein sequence, read N- to C-terminus: MSKQQEQDTPSFGEIRQRLQAGEDFDLAHRLQEREYEMYYNHNRNVNGTIVGDRKKTREEQIAEDEHAASLRRLGHAERSMSDEEYARQLQEEMDRLDASIQMDKEAQLREDARMAWLLQQESSATPAPSRHSGDLISFEDQPQQSSNTTTSSSCQSANNS.

Residues 1–10 (MSKQQEQDTP) show a composition bias toward polar residues. Disordered stretches follow at residues 1–20 (MSKQ…QRLQ), 55–84 (KKTR…MSDE), and 118–161 (LLQQ…ANNS). A coiled-coil region spans residues 82 to 107 (SDEEYARQLQEEMDRLDASIQMDKEA). Over residues 144 to 161 (QQSSNTTTSSSCQSANNS) the composition is skewed to low complexity.

This is an uncharacterized protein from Caenorhabditis elegans.